Reading from the N-terminus, the 321-residue chain is Phospholipid phosphatase-related protein type 5 (321 aa).

The next 6 membrane-spanning stretches (helical) occupy residues Val6–Leu26, Ala62–Val82, Phe122–Val142, Ala196–Thr213, Val225–Tyr245, and Val252–Asn272.

Belongs to the PA-phosphatase related phosphoesterase family.

The protein resides in the cell membrane. Its function is as follows. Induces filopodia formation and promotes neurite growth in a CDC42-independent manner; impedes neurite growth inhibitory-mediated axonal retraction. The protein is Phospholipid phosphatase-related protein type 5 of Mus musculus (Mouse).